The primary structure comprises 487 residues: Solute carrier family 22 member 15-like (487 aa).

A helical membrane pass occupies residues 23 to 43; that stretch reads FLTLLQIYVACQSMLIVLVGA. A glycan (N-linked (GlcNAc...) asparagine) is linked at Asn70. The next 11 helical transmembrane spans lie at 90–110, 117–137, 141–161, 178–198, 203–223, 286–306, 315–335, 345–365, 374–394, 408–428, and 435–455; these read LASS…GPLS, PVYL…ALAP, VFAV…LVSF, SLTN…GFYI, TLAF…FVLP, ILLM…TLNA, LNVA…LYFI, ATAG…FVPE, TVLA…VYIY, LGVC…IPAM, and MPFV…LLLP.

Belongs to the major facilitator (TC 2.A.1) superfamily. Organic cation transporter (TC 2.A.1.19) family.

It localises to the membrane. Probably transports organic cations. This Xenopus laevis (African clawed frog) protein is Solute carrier family 22 member 15-like (slc22a15b).